The sequence spans 274 residues: NADPH-dependent 7-cyano-7-deazaguanine reductase (274 aa).

Residue 80 to 82 (VES) participates in substrate binding. 82 to 83 (SK) provides a ligand contact to NADPH. Cys181 (thioimide intermediate) is an active-site residue. Asp188 functions as the Proton donor in the catalytic mechanism. A substrate-binding site is contributed by 220 to 221 (HE). 249–250 (RG) lines the NADPH pocket.

This sequence belongs to the GTP cyclohydrolase I family. QueF type 2 subfamily. Homodimer.

Its subcellular location is the cytoplasm. The catalysed reaction is 7-aminomethyl-7-carbaguanine + 2 NADP(+) = 7-cyano-7-deazaguanine + 2 NADPH + 3 H(+). It functions in the pathway tRNA modification; tRNA-queuosine biosynthesis. Catalyzes the NADPH-dependent reduction of 7-cyano-7-deazaguanine (preQ0) to 7-aminomethyl-7-deazaguanine (preQ1). In Burkholderia ambifaria (strain MC40-6), this protein is NADPH-dependent 7-cyano-7-deazaguanine reductase.